Consider the following 402-residue polypeptide: Peptidyl-prolyl cis-trans isomerase FKBP8 (402 aa).

Positions 28 to 39 are enriched in acidic residues; sequence DGVDDAEEEDDL. Residues 28–54 are disordered; that stretch reads DGVDDAEEEDDLSGLPPLEDMGQPTVE. The region spanning 110–194 is the PPIase FKBP-type domain; it reads GQVVTVHLQM…CLEVTLKTAE (85 aa). Residues 211–244 form a TPR 1 repeat; sequence ANRKRECGNAHYQRADFVLAANSYDLAIKAITSN. Residues K239, K261, K263, and K274 each participate in a glycyl lysine isopeptide (Lys-Gly) (interchain with G-Cter in ubiquitin) cross-link. TPR repeat units follow at residues 262-295 and 296-329; these read VKCL…QPDN and IKAL…EPSN. A Phosphoserine modification is found at S286. Glycyl lysine isopeptide (Lys-Gly) (interchain with G-Cter in ubiquitin) cross-links involve residues K297, K304, K324, K330, K338, K341, and K342. The chain crosses the membrane as a helical span at residues 380-400; that stretch reads WLFGATAVALGGVALSVVIAA.

In terms of assembly, homomultimers or heteromultimers (Potential). Forms heterodimer with calmodulin. When activated by calmodulin and calcium, interacts with the BH4 domain of BCL2 and weakly with BCLX isoform Bcl-X(L). Does not bind and inhibit calcineurin. Interacts with ZFYVE27; may negatively regulate ZFYVE27 phosphorylation. Ca(2+) is required as a cofactor. Post-translationally, ubiquitinated by PRKN during mitophagy, leading to its degradation and enhancement of mitophagy. Deubiquitinated by USP30. As to expression, detected throughout the embryonic body, in caudal neural tube, limbs and head. Detected in adult retina, brain, heart, kidney, liver, pancreas, lung, testis and urinary bladder (at protein level). Detected in adult brain, kidney, liver, testis and trigeminal nerve, and in embryo. Detected at lower levels in lung, spleen, heart and ovary. Widely expressed in forebrain. Detected in the Purkinje cell layer in the cerebellum and in hippocampus neurons.

The protein resides in the mitochondrion membrane. The catalysed reaction is [protein]-peptidylproline (omega=180) = [protein]-peptidylproline (omega=0). Its function is as follows. Constitutively inactive PPiase, which becomes active when bound to calmodulin and calcium. Seems to act as a chaperone for BCL2, targets it to the mitochondria and modulates its phosphorylation state. The BCL2/FKBP8/calmodulin/calcium complex probably interferes with the binding of BCL2 to its targets. The active form of FKBP8 may therefore play a role in the regulation of apoptosis. Required for normal embryonic development. The chain is Peptidyl-prolyl cis-trans isomerase FKBP8 (Fkbp8) from Mus musculus (Mouse).